Reading from the N-terminus, the 439-residue chain is MSKLYLMSLGCNKNLVDSEIMLGRLSAYELCDEPSKADVIIVNTCGFIDSAKKESINAILDLHEQRKKDSLLVVTGCLMQRYREELMKELPEVDLFTGVGDYERIDEMILKKTNLFSNSTYLQSENSKRIITGSNSHAFIKIAEGCNQKCSFCAIPSFKGKLKSREISSIIAELKDLVARGYKDFSFIAQDTSSYLFDKGEKDGLIRLIDEVEKIKGIRAARILYLYPTSASEALIKRIIASEIFVNYFDMPLQHISDNMLKIMKRGANSTRLKEMLNLMKSAPNSFLRTGFIVGHPGESEADFEELCEFVKDFGFDRVSVFAYSKEEDTTAFDMEQVPFKVINKRLKIIEKIVDEVIEKSFEKEVGQKRLVVCTGESSEGEFFIAAKDLRWDREIDGEILINESECGNLEMGQIYECEILQNLDKKLLAKALRKVDAN.

An MTTase N-terminal domain is found at 2 to 114 (SKLYLMSLGC…IDEMILKKTN (113 aa)). Positions 11, 45, 77, 146, 150, and 153 each coordinate [4Fe-4S] cluster. The region spanning 132 to 363 (TGSNSHAFIK…VDEVIEKSFE (232 aa)) is the Radical SAM core domain.

This sequence belongs to the methylthiotransferase family. RimO subfamily. It depends on [4Fe-4S] cluster as a cofactor.

The protein resides in the cytoplasm. It catalyses the reaction L-aspartate(89)-[ribosomal protein uS12]-hydrogen + (sulfur carrier)-SH + AH2 + 2 S-adenosyl-L-methionine = 3-methylsulfanyl-L-aspartate(89)-[ribosomal protein uS12]-hydrogen + (sulfur carrier)-H + 5'-deoxyadenosine + L-methionine + A + S-adenosyl-L-homocysteine + 2 H(+). In terms of biological role, catalyzes the methylthiolation of an aspartic acid residue of ribosomal protein uS12. In Campylobacter jejuni subsp. jejuni serotype O:23/36 (strain 81-176), this protein is Ribosomal protein uS12 methylthiotransferase RimO.